The primary structure comprises 664 residues: Exoribonuclease 2 (664 aa).

The 329-residue stretch at 193-521 folds into the RNB domain; sequence RIDMTHIPFV…INHRMLKALI (329 aa). In terms of domain architecture, S1 motif spans 568 to 650; sequence QTLFTGEIFD…ENRSLVAKPT (83 aa).

Belongs to the RNR ribonuclease family. RNase II subfamily.

It localises to the cytoplasm. The catalysed reaction is Exonucleolytic cleavage in the 3'- to 5'-direction to yield nucleoside 5'-phosphates.. Its function is as follows. Involved in mRNA degradation. Hydrolyzes single-stranded polyribonucleotides processively in the 3' to 5' direction. The protein is Exoribonuclease 2 of Vibrio vulnificus (strain CMCP6).